Reading from the N-terminus, the 377-residue chain is 3-dehydroquinate synthase (377 aa).

Residues 113-117, 137-138, lysine 150, and lysine 159 contribute to the NAD(+) site; these read GVIGD and TT. Positions 192, 254, and 273 each coordinate Zn(2+).

It belongs to the sugar phosphate cyclases superfamily. Dehydroquinate synthase family. The cofactor is Co(2+). Zn(2+) is required as a cofactor. NAD(+) serves as cofactor.

The protein resides in the cytoplasm. It catalyses the reaction 7-phospho-2-dehydro-3-deoxy-D-arabino-heptonate = 3-dehydroquinate + phosphate. It functions in the pathway metabolic intermediate biosynthesis; chorismate biosynthesis; chorismate from D-erythrose 4-phosphate and phosphoenolpyruvate: step 2/7. In terms of biological role, catalyzes the conversion of 3-deoxy-D-arabino-heptulosonate 7-phosphate (DAHP) to dehydroquinate (DHQ). This chain is 3-dehydroquinate synthase, found in Bartonella bacilliformis (strain ATCC 35685 / KC583 / Herrer 020/F12,63).